The following is a 677-amino-acid chain: DNA-directed RNA polymerase subunit beta' (677 aa).

Residues C69, C71, C87, and C90 each contribute to the Zn(2+) site. D489, D491, and D493 together coordinate Mg(2+).

Belongs to the RNA polymerase beta' chain family. RpoC1 subfamily. As to quaternary structure, in plastids the minimal PEP RNA polymerase catalytic core is composed of four subunits: alpha, beta, beta', and beta''. When a (nuclear-encoded) sigma factor is associated with the core the holoenzyme is formed, which can initiate transcription. Requires Mg(2+) as cofactor. Zn(2+) is required as a cofactor.

It localises to the plastid. The protein localises to the chloroplast. It catalyses the reaction RNA(n) + a ribonucleoside 5'-triphosphate = RNA(n+1) + diphosphate. DNA-dependent RNA polymerase catalyzes the transcription of DNA into RNA using the four ribonucleoside triphosphates as substrates. This Spinacia oleracea (Spinach) protein is DNA-directed RNA polymerase subunit beta'.